The chain runs to 196 residues: Flagellar transcriptional regulator FlhC (196 aa).

Zn(2+)-binding residues include Cys138, Cys141, Cys158, and Cys161.

The protein belongs to the FlhC family. In terms of assembly, heterohexamer composed of two FlhC and four FlhD subunits. Each FlhC binds a FlhD dimer, forming a heterotrimer, and a hexamer assembles by dimerization of two heterotrimers. It depends on Zn(2+) as a cofactor.

Its subcellular location is the cytoplasm. Its function is as follows. Functions in complex with FlhD as a master transcriptional regulator that regulates transcription of several flagellar and non-flagellar operons by binding to their promoter region. Activates expression of class 2 flagellar genes, including fliA, which is a flagellum-specific sigma factor that turns on the class 3 genes. Also regulates genes whose products function in a variety of physiological pathways. This is Flagellar transcriptional regulator FlhC from Sodalis glossinidius (strain morsitans).